We begin with the raw amino-acid sequence, 1404 residues long: DNA-directed RNA polymerase subunit beta' (1404 aa).

Residues Cys72, Cys74, Cys87, and Cys90 each contribute to the Zn(2+) site. Mg(2+) contacts are provided by Asp463, Asp465, and Asp467. Residues Cys811, Cys885, Cys892, and Cys895 each coordinate Zn(2+).

It belongs to the RNA polymerase beta' chain family. As to quaternary structure, the RNAP catalytic core consists of 2 alpha, 1 beta, 1 beta' and 1 omega subunit. When a sigma factor is associated with the core the holoenzyme is formed, which can initiate transcription. Mg(2+) is required as a cofactor. Requires Zn(2+) as cofactor.

The catalysed reaction is RNA(n) + a ribonucleoside 5'-triphosphate = RNA(n+1) + diphosphate. Its function is as follows. DNA-dependent RNA polymerase catalyzes the transcription of DNA into RNA using the four ribonucleoside triphosphates as substrates. This is DNA-directed RNA polymerase subunit beta' from Jannaschia sp. (strain CCS1).